Here is a 431-residue protein sequence, read N- to C-terminus: D-tagatose-1,6-bisphosphate aldolase subunit KbaZ (431 aa).

The protein belongs to the GatZ/KbaZ family. KbaZ subfamily. As to quaternary structure, forms a complex with KbaY.

It participates in carbohydrate metabolism; D-tagatose 6-phosphate degradation; D-glyceraldehyde 3-phosphate and glycerone phosphate from D-tagatose 6-phosphate: step 2/2. In terms of biological role, component of the tagatose-1,6-bisphosphate aldolase KbaYZ that is required for full activity and stability of the Y subunit. Could have a chaperone-like function for the proper and stable folding of KbaY. When expressed alone, KbaZ does not show any aldolase activity. The protein is D-tagatose-1,6-bisphosphate aldolase subunit KbaZ of Salmonella arizonae (strain ATCC BAA-731 / CDC346-86 / RSK2980).